Consider the following 266-residue polypeptide: MEEAEYESVLCVKPDVHVYRIPPRATNRGYRAAEWQLDQPSWSGRLRITAKGQVAYIKLEDRTSGELFAQAPVDQFPGTAVESVTDSSRYFVIRIEDGNGRRAFIGIGFGDRGDAFDFNVALQDHFKWVKQQCEFAKQAQNPDQGPKLDLSFKEGQTIKLNIASMKKKDGAAGTPRARPTSTGGLSLLPPPPGAKTAALAPLSGEHLSVGGSVVQPAVSPSSGGATVSWPQPKPATTATADIWGDFTKSTGSTSSQTQPGAGWVQF.

2 disordered regions span residues 164–191 and 244–266; these read SMKK…LPPP and GDFT…WVQF. Ser181 carries the phosphoserine modification. The WXXF motif 1 signature appears at 243–246; that stretch reads WGDF. Positions 247 to 258 are enriched in low complexity; sequence TKSTGSTSSQTQ. The short motif at 263 to 266 is the WXXF motif 2 element; it reads WVQF.

It belongs to the NECAP family. In terms of assembly, interacts with AP1G1 and AP2A1 components of the adapter protein complexes AP-1 and AP-2. Interacts with the GAE domain proteins GGA1, GGA2 and GGA3.

It is found in the cytoplasmic vesicle. The protein localises to the clathrin-coated vesicle membrane. It localises to the cell membrane. Functionally, involved in endocytosis. This chain is Adaptin ear-binding coat-associated protein 2 (NECAP2), found in Bos taurus (Bovine).